Here is a 349-residue protein sequence, read N- to C-terminus: tRNA N6-adenosine threonylcarbamoyltransferase (349 aa).

His116 and His120 together coordinate Fe cation. Substrate contacts are provided by residues 139–143 (LVSGG), Asp172, Gly185, and Asn283. Asp311 is a Fe cation binding site.

Belongs to the KAE1 / TsaD family. Fe(2+) is required as a cofactor.

Its subcellular location is the cytoplasm. It carries out the reaction L-threonylcarbamoyladenylate + adenosine(37) in tRNA = N(6)-L-threonylcarbamoyladenosine(37) in tRNA + AMP + H(+). Required for the formation of a threonylcarbamoyl group on adenosine at position 37 (t(6)A37) in tRNAs that read codons beginning with adenine. Is involved in the transfer of the threonylcarbamoyl moiety of threonylcarbamoyl-AMP (TC-AMP) to the N6 group of A37, together with TsaE and TsaB. TsaD likely plays a direct catalytic role in this reaction. This chain is tRNA N6-adenosine threonylcarbamoyltransferase, found in Colwellia psychrerythraea (strain 34H / ATCC BAA-681) (Vibrio psychroerythus).